A 425-amino-acid polypeptide reads, in one-letter code: Septin-11 (425 aa).

Ala-2 carries the post-translational modification N-acetylalanine. Ser-9 is modified (phosphoserine). One can recognise a Septin-type G domain in the interval 38-304 (QGFCFNILCV…ELYRRCKLEE (267 aa)). A G1 motif region spans residues 48 to 55 (GETGIGKS). Residues 48-55 (GETGIGKS), Gly-103, 184-192 (KADTIAKNE), Gly-238, and Arg-253 each bind GTP. The interval 100–103 (DTVG) is G3 motif. The G4 motif stretch occupies residues 183 to 186 (AKAD). Residues 320–410 (QETYEAKRNE…AAQLLQSQAQ (91 aa)) are a coiled coil. A disordered region spans residues 399-425 (KAAAQLLQSQAQQSGAQQTKKDKDKKN). Residues 401–416 (AAQLLQSQAQQSGAQQ) are compositionally biased toward low complexity.

The protein belongs to the TRAFAC class TrmE-Era-EngA-EngB-Septin-like GTPase superfamily. Septin GTPase family. As to quaternary structure, septins polymerize into heterooligomeric protein complexes that form filaments, and can associate with cellular membranes, actin filaments and microtubules. Forms homooligomers. GTPase activity is required for filament formation. Interacts with SEPTIN7, SEPTIN9 and SEPTIN12.

The protein resides in the cytoplasm. It is found in the cytoskeleton. It localises to the synapse. Its subcellular location is the cell projection. The protein localises to the dendritic spine. The protein resides in the axon. In terms of biological role, filament-forming cytoskeletal GTPase. May play a role in cytokinesis (Potential). May play a role in the cytoarchitecture of neurons, including dendritic arborization and dendritic spines, and in GABAergic synaptic connectivity. This chain is Septin-11, found in Bos taurus (Bovine).